The sequence spans 987 residues: UPF0182 protein DIP0733 (987 aa).

A run of 7 helical transmembrane segments spans residues 19 to 39, 63 to 83, 115 to 135, 176 to 196, 212 to 234, 261 to 281, and 290 to 310; these read LTWL…VVDL, IGLF…AGWF, FLVV…QQAW, SVLL…LGGI, YAKV…SYWL, AKIV…SVIV, and ISTV…PIMM. The segment covering 904 to 927 has biased composition (basic and acidic residues); the sequence is DLGEAKGLKPESQNRDKPEDKEGK. A disordered region spans residues 904–950; the sequence is DLGEAKGLKPESQNRDKPEDKEGKAPSTPSAPASGSGTTGEAIGKIN. Residues 928–943 show a composition bias toward low complexity; the sequence is APSTPSAPASGSGTTG.

This sequence belongs to the UPF0182 family.

Its subcellular location is the cell membrane. The chain is UPF0182 protein DIP0733 from Corynebacterium diphtheriae (strain ATCC 700971 / NCTC 13129 / Biotype gravis).